The primary structure comprises 239 residues: Demethylmenaquinone methyltransferase (239 aa).

S-adenosyl-L-methionine-binding positions include threonine 68, aspartate 86, and 111-112 (NG).

It belongs to the class I-like SAM-binding methyltransferase superfamily. MenG/UbiE family.

It carries out the reaction a 2-demethylmenaquinol + S-adenosyl-L-methionine = a menaquinol + S-adenosyl-L-homocysteine + H(+). It participates in quinol/quinone metabolism; menaquinone biosynthesis; menaquinol from 1,4-dihydroxy-2-naphthoate: step 2/2. Its function is as follows. Methyltransferase required for the conversion of demethylmenaquinol (DMKH2) to menaquinol (MKH2). The polypeptide is Demethylmenaquinone methyltransferase (Tropheryma whipplei (strain TW08/27) (Whipple's bacillus)).